Reading from the N-terminus, the 189-residue chain is Tetratricopeptide repeat protein 36 (189 aa).

3 TPR repeats span residues 51-84, 86-118, and 123-156; these read SKALELQGVMAAEAGDLSTALERFGQAICLLPER, SAYNNRAQARRLQGDVAGALEDLERAVELSGGR, and RQSFVQRGLLARLQGRDDDARRDFERAARLGSPF.

It belongs to the TTC36 family.

In Homo sapiens (Human), this protein is Tetratricopeptide repeat protein 36 (TTC36).